The sequence spans 190 residues: Shikimate kinase (190 aa).

22–27 (GSGKST) is a binding site for ATP. Mg(2+) is bound at residue Ser-26. Substrate is bound by residues Asp-44, Arg-68, and Gly-90. Arg-127 lines the ATP pocket. Arg-146 is a substrate binding site.

Belongs to the shikimate kinase family. Monomer. The cofactor is Mg(2+).

Its subcellular location is the cytoplasm. The catalysed reaction is shikimate + ATP = 3-phosphoshikimate + ADP + H(+). The protein operates within metabolic intermediate biosynthesis; chorismate biosynthesis; chorismate from D-erythrose 4-phosphate and phosphoenolpyruvate: step 5/7. Catalyzes the specific phosphorylation of the 3-hydroxyl group of shikimic acid using ATP as a cosubstrate. The chain is Shikimate kinase from Microcystis aeruginosa (strain NIES-843 / IAM M-2473).